Consider the following 647-residue polypeptide: MKNEPIYNLLNSINSPDDLRRLEVDQLPEVCDELRQDIIKELSCNPGHFAASLGTVELTVALHYVYNTPYDRIVWDVGHQAYGHKILTGRREAFSTNRKLGGIRPFPSPEESEYDTFTCGHASNSISAALGMAVAAAKKGDDQRHVIAIIGDGSMSGGLAFEGLNNSSTTPNNLLIILNDNDMAIDRSVGGMKQYLFNLTTSNRYNQLRFKASRLLFKLGILNDERRKALIRFGNSLKSMAAQQQNIFEGMNIRYFGPIDGHDIKNLSRVLRDIKDLKGPKILHLHTIKGKGFAPAEKHATEWHAPGKFDPVTGERFVANTEGMPPLFQDVFGNTLVELAEANPRIVGVTPAMPSGCSMNILMSKMPKRAFDVGIAEGHAVTFSGGMAKDGLQPFCNIYSSFMQRAYDNIIHDVAIQNLPVVLCLDRAGLVGEDGPTHHGAFDMAYLRPIPNLTIASPMNEHELRRLMYTAQLPDKGPFVLRYPRGRGVLVDWKCPLEEIPVGKGRKLKDGKDIAVISIGPIGNKARSAIARAESESGRSIAHYDLRFLKPLDEELLHEVGRTFRHIVTIEDGTIQGGMGSAVLEFMADHEYTPTVKRIGIPDKFVQHGTVAELYQLCGMDEDSLTKELLKQCELLPDMSKIKELTN.

Residues H79 and 120–122 each bind thiamine diphosphate; that span reads GHA. D152 is a Mg(2+) binding site. Residues 153–154, N181, F293, and E377 each bind thiamine diphosphate; that span reads GS. Residue N181 coordinates Mg(2+).

This sequence belongs to the transketolase family. DXPS subfamily. Homodimer. Requires Mg(2+) as cofactor. It depends on thiamine diphosphate as a cofactor.

The catalysed reaction is D-glyceraldehyde 3-phosphate + pyruvate + H(+) = 1-deoxy-D-xylulose 5-phosphate + CO2. It functions in the pathway metabolic intermediate biosynthesis; 1-deoxy-D-xylulose 5-phosphate biosynthesis; 1-deoxy-D-xylulose 5-phosphate from D-glyceraldehyde 3-phosphate and pyruvate: step 1/1. Catalyzes the acyloin condensation reaction between C atoms 2 and 3 of pyruvate and glyceraldehyde 3-phosphate to yield 1-deoxy-D-xylulose-5-phosphate (DXP). This chain is 1-deoxy-D-xylulose-5-phosphate synthase, found in Bacteroides thetaiotaomicron (strain ATCC 29148 / DSM 2079 / JCM 5827 / CCUG 10774 / NCTC 10582 / VPI-5482 / E50).